The chain runs to 146 residues: Large ribosomal subunit protein uL22 (146 aa).

The protein belongs to the universal ribosomal protein uL22 family. In terms of assembly, part of the 50S ribosomal subunit.

This protein binds specifically to 23S rRNA; its binding is stimulated by other ribosomal proteins, e.g. L4, L17, and L20. It is important during the early stages of 50S assembly. It makes multiple contacts with different domains of the 23S rRNA in the assembled 50S subunit and ribosome. In terms of biological role, the globular domain of the protein is located near the polypeptide exit tunnel on the outside of the subunit, while an extended beta-hairpin is found that lines the wall of the exit tunnel in the center of the 70S ribosome. In Nocardioides sp. (strain ATCC BAA-499 / JS614), this protein is Large ribosomal subunit protein uL22.